A 774-amino-acid polypeptide reads, in one-letter code: Ion-translocating oxidoreductase complex subunit C (774 aa).

4Fe-4S ferredoxin-type domains are found at residues 359–389 and 399–428; these read ELPE…QQLH and QLLA…VQYY. Positions 369, 372, 375, 379, 408, 411, 414, and 418 each coordinate [4Fe-4S] cluster. Over residues 453-490 the composition is skewed to basic and acidic residues; that stretch reads EQRQARLRRDEERRAAERAQRAEKAALARAAQAEREEA. The tract at residues 453–493 is disordered; it reads EQRQARLRRDEERRAAERAQRAEKAALARAAQAEREEAAPA.

Belongs to the 4Fe4S bacterial-type ferredoxin family. RnfC subfamily. In terms of assembly, the complex is composed of six subunits: RnfA, RnfB, RnfC, RnfD, RnfE and RnfG. [4Fe-4S] cluster serves as cofactor.

Its subcellular location is the cell inner membrane. Functionally, part of a membrane-bound complex that couples electron transfer with translocation of ions across the membrane. This chain is Ion-translocating oxidoreductase complex subunit C, found in Pseudomonas aeruginosa (strain ATCC 15692 / DSM 22644 / CIP 104116 / JCM 14847 / LMG 12228 / 1C / PRS 101 / PAO1).